A 238-amino-acid chain; its full sequence is MAFTFKQFHIDDLNCGMAVSTDAVVLGAWAPLTNAKQILDIGAGSGILGLMAAQRSQANITCIELDNTAAIACQHNIAQSPWASRIRLVQGSIQQLSQAEEYQGYFDHIICNPPYFEHGPQAQLSQRAMARHTDQLSFNELLAAIEQCLSPNGLASLILPIQSLHNFNHLLSQSRLEWVERVDIKSVEGKRANRVLCLLTTQTHRTVEPKVSELTLRDTSGQYSQAMVHLTQDFYLKL.

The protein belongs to the methyltransferase superfamily. tRNA (adenine-N(6)-)-methyltransferase family.

It localises to the cytoplasm. It catalyses the reaction adenosine(37) in tRNA1(Val) + S-adenosyl-L-methionine = N(6)-methyladenosine(37) in tRNA1(Val) + S-adenosyl-L-homocysteine + H(+). Specifically methylates the adenine in position 37 of tRNA(1)(Val) (anticodon cmo5UAC). In Shewanella putrefaciens (strain CN-32 / ATCC BAA-453), this protein is tRNA1(Val) (adenine(37)-N6)-methyltransferase.